We begin with the raw amino-acid sequence, 310 residues long: Methionyl-tRNA formyltransferase (310 aa).

(6S)-5,6,7,8-tetrahydrofolate is bound at residue 111–114 (SLLP).

This sequence belongs to the Fmt family.

It catalyses the reaction L-methionyl-tRNA(fMet) + (6R)-10-formyltetrahydrofolate = N-formyl-L-methionyl-tRNA(fMet) + (6S)-5,6,7,8-tetrahydrofolate + H(+). Its function is as follows. Attaches a formyl group to the free amino group of methionyl-tRNA(fMet). The formyl group appears to play a dual role in the initiator identity of N-formylmethionyl-tRNA by promoting its recognition by IF2 and preventing the misappropriation of this tRNA by the elongation apparatus. The polypeptide is Methionyl-tRNA formyltransferase (Rhodopseudomonas palustris (strain ATCC BAA-98 / CGA009)).